Here is a 191-residue protein sequence, read N- to C-terminus: Dephospho-CoA kinase (191 aa).

Positions 3–191 constitute a DPCK domain; the sequence is AIGITGSYAS…NLIANLECRV (189 aa). 11–16 lines the ATP pocket; that stretch reads ASGKTF.

The protein belongs to the CoaE family.

The protein localises to the cytoplasm. It carries out the reaction 3'-dephospho-CoA + ATP = ADP + CoA + H(+). The protein operates within cofactor biosynthesis; coenzyme A biosynthesis; CoA from (R)-pantothenate: step 5/5. Catalyzes the phosphorylation of the 3'-hydroxyl group of dephosphocoenzyme A to form coenzyme A. This is Dephospho-CoA kinase from Rickettsia bellii (strain RML369-C).